The sequence spans 147 residues: Large ribosomal subunit protein uL13 (147 aa).

It belongs to the universal ribosomal protein uL13 family. In terms of assembly, part of the 50S ribosomal subunit.

Functionally, this protein is one of the early assembly proteins of the 50S ribosomal subunit, although it is not seen to bind rRNA by itself. It is important during the early stages of 50S assembly. This Lactobacillus delbrueckii subsp. bulgaricus (strain ATCC 11842 / DSM 20081 / BCRC 10696 / JCM 1002 / NBRC 13953 / NCIMB 11778 / NCTC 12712 / WDCM 00102 / Lb 14) protein is Large ribosomal subunit protein uL13.